The following is a 201-amino-acid chain: Putative Ras-related protein Rab-1C (201 aa).

Residues 15 to 23 (GDSGVGKSC), 33 to 40 (YTESYIST), and 63 to 67 (DTAGQ) contribute to the GTP site. The Effector region motif lies at 37 to 45 (YISTIGVDF). Ser-76 carries the (Microbial infection) O-(2-cholinephosphoryl)serine modification. Residues 121–124 (NKSD) and 151–153 (SAK) each bind GTP. Residues 174–201 (GPGAASGGERPNLKIDSTPVKPAGGGCC) are disordered. 2 S-geranylgeranyl cysteine lipidation sites follow: Cys-200 and Cys-201.

This sequence belongs to the small GTPase superfamily. Rab family. Post-translationally, (Microbial infection) Phosphocholinated at Ser-76 by L.pneumophila AnkX, leading to displace GDP dissociation inhibitors (GDI). Both GDP-bound and GTP-bound forms can be phosphocholinated. Dephosphocholinated by L.pneumophila Lem3, restoring accessibility to L.pneumophila GTPase effector LepB. In terms of processing, (Microbial infection) Glycosylated by S.typhimurium protein Ssek3: arginine GlcNAcylation prevents GTPase activity, thereby disrupting vesicular protein transport from the endoplasmic reticulum (ER) to the Golgi compartment.

It localises to the membrane. Its subcellular location is the cytoplasm. The catalysed reaction is GTP + H2O = GDP + phosphate + H(+). Protein transport. Probably involved in vesicular traffic. In Homo sapiens (Human), this protein is Putative Ras-related protein Rab-1C (RAB1C).